A 227-amino-acid polypeptide reads, in one-letter code: Germin-like protein 3-3 (227 aa).

An N-terminal signal peptide occupies residues 1–26 (MECFKTTLAGVVLVVLLLQQAPVLRA). Residues Cys-36 and Cys-51 are joined by a disulfide bond. The Cupin type-1 domain occupies 65 to 217 (SRLATGGDVN…ALRVDAGVVE (153 aa)). Asn-78 and Asn-81 each carry an N-linked (GlcNAc...) asparagine glycan. Mn(2+) is bound by residues His-114, His-116, Glu-121, and His-163.

Belongs to the germin family. As to quaternary structure, oligomer (believed to be a pentamer but probably hexamer).

The protein localises to the secreted. It is found in the extracellular space. It localises to the apoplast. May play a role in plant defense. Probably has no oxalate oxidase activity even if the active site is conserved. The sequence is that of Germin-like protein 3-3 from Oryza sativa subsp. japonica (Rice).